A 382-amino-acid chain; its full sequence is MDTVEPINLLGLDAKALTDLVGQWGGKPFRARQLQRWVHQRSVDSFDAMTDLARDFRAQLSERAIIEALPVNIEQRSSDGTRKWLFDVGQGNAIETVFIPEDDRGTLCISSQAGCVVNCRFCSTGHQGFNRNLRTSEIIGQLWWAKRVLEADIGSARLANAGAEDTRVISNVVMMGMGEPLLNYDQVLPALRLMLDDNGYGLSRRRVTVSTSGVVPMMDRLAQDCPVALAVSLHAPNDALRDDLVPLNKKYPLKELLAACERYLAHAPRDFITFEYCMLDGINDTDQHAKELIQLARQVRCKLNLIPFNPFPASGLKRSAAPRVKVFAQRLMDAGIITTVRKTRGDDIDAACGQLAGEVKDRTRITERNAASRSIPIRQVHA.

The active-site Proton acceptor is glutamate 95. A Radical SAM core domain is found at 101–347 (EDDRGTLCIS…TTVRKTRGDD (247 aa)). A disulfide bridge links cysteine 108 with cysteine 352. Positions 115, 119, and 122 each coordinate [4Fe-4S] cluster. Residues 178–179 (GE), serine 210, 232–234 (SLH), and asparagine 309 each bind S-adenosyl-L-methionine. The active-site S-methylcysteine intermediate is cysteine 352.

Belongs to the radical SAM superfamily. RlmN family. [4Fe-4S] cluster is required as a cofactor.

The protein localises to the cytoplasm. The catalysed reaction is adenosine(2503) in 23S rRNA + 2 reduced [2Fe-2S]-[ferredoxin] + 2 S-adenosyl-L-methionine = 2-methyladenosine(2503) in 23S rRNA + 5'-deoxyadenosine + L-methionine + 2 oxidized [2Fe-2S]-[ferredoxin] + S-adenosyl-L-homocysteine. It catalyses the reaction adenosine(37) in tRNA + 2 reduced [2Fe-2S]-[ferredoxin] + 2 S-adenosyl-L-methionine = 2-methyladenosine(37) in tRNA + 5'-deoxyadenosine + L-methionine + 2 oxidized [2Fe-2S]-[ferredoxin] + S-adenosyl-L-homocysteine. Its function is as follows. Specifically methylates position 2 of adenine 2503 in 23S rRNA and position 2 of adenine 37 in tRNAs. m2A2503 modification seems to play a crucial role in the proofreading step occurring at the peptidyl transferase center and thus would serve to optimize ribosomal fidelity. This chain is Dual-specificity RNA methyltransferase RlmN, found in Bordetella avium (strain 197N).